The following is a 969-amino-acid chain: Protein translocase subunit SecA (969 aa).

ATP is bound by residues Gln-99, 117 to 121 (GEGKT), and Asp-631.

It belongs to the SecA family. In terms of assembly, monomer and homodimer. Part of the essential Sec protein translocation apparatus which comprises SecA, SecYEG and auxiliary proteins SecDF. Other proteins may also be involved.

The protein resides in the cell inner membrane. The protein localises to the cytoplasm. It catalyses the reaction ATP + H2O + cellular proteinSide 1 = ADP + phosphate + cellular proteinSide 2.. In terms of biological role, part of the Sec protein translocase complex. Interacts with the SecYEG preprotein conducting channel. Has a central role in coupling the hydrolysis of ATP to the transfer of proteins into and across the cell membrane, serving as an ATP-driven molecular motor driving the stepwise translocation of polypeptide chains across the membrane. In Chlamydia trachomatis serovar D (strain ATCC VR-885 / DSM 19411 / UW-3/Cx), this protein is Protein translocase subunit SecA.